We begin with the raw amino-acid sequence, 129 residues long: Phosphoribosyl-AMP cyclohydrolase (129 aa).

D77 serves as a coordination point for Mg(2+). Residue C78 coordinates Zn(2+). Residues D79 and D81 each contribute to the Mg(2+) site. Positions 94 and 101 each coordinate Zn(2+).

It belongs to the PRA-CH family. In terms of assembly, homodimer. Requires Mg(2+) as cofactor. Zn(2+) serves as cofactor.

Its subcellular location is the cytoplasm. The catalysed reaction is 1-(5-phospho-beta-D-ribosyl)-5'-AMP + H2O = 1-(5-phospho-beta-D-ribosyl)-5-[(5-phospho-beta-D-ribosylamino)methylideneamino]imidazole-4-carboxamide. The protein operates within amino-acid biosynthesis; L-histidine biosynthesis; L-histidine from 5-phospho-alpha-D-ribose 1-diphosphate: step 3/9. Catalyzes the hydrolysis of the adenine ring of phosphoribosyl-AMP. The sequence is that of Phosphoribosyl-AMP cyclohydrolase from Methanosphaera stadtmanae (strain ATCC 43021 / DSM 3091 / JCM 11832 / MCB-3).